The sequence spans 1118 residues: MTSIYTSTEPTNSAFTTEDYKPQLVEGVNSVLVIGSGGLSIGQAGEFDYSGSQAIKALKEDNKFTILVNPNIATNQTSHSLADKIYYLPVTPEYITYIIELERPDAILLTFGGQTGLNCGVALDESGVLAKYNVKVLGTPIKTLITSEDRDLFASALKDINIPIAESFACETVDEALEAAERVKYPVIVRSAYALGGLGSGFANNASEMKELAAQSLSLAPQILVEKSLKGWKEVEYEVVRDRVGNCITVCNMENFDPLGVHTGDSMVFAPSQTLSDEEFHMLRSAAIKIIRHLGVIGECNVQYALQPDGLDYRVIEVNARLSRSSALASKATGYPLAYTAAKIGLGYTLPELPNPITKTTVANFEPSLDYIVAKIPKWDLSKFQYVDRSIGSSMKSVGEVMAIGRNYEEAFQKALRQVDPSLLGFQGSTEFGDQLDEALRTPTDRRVLAIGQALIHENYTVERVNELSKIDKWFLYKCMNIVNIYKELESVKSLSDLSKDLLQRAKKLGFSDKQIAVTINKHASTNINELEIRSLRKTLGIIPFVKRIDTLAAEFPAQTNYLYTTYNATKNDVEFNENGMLVLGSGVYRIGSSVEFDWCAVNTAKTLRDQGKKTIMINYNPETVSTDFDEVDRLYFEELSYERVMDIYELEQSEGCIISVGGQLPQNIALKLYDNGCNIMGTNPNDIDRAENRHKFSSILDSIDVDQPEWSELTSVEEAKLFASKVNYPVLIRPSYVLSGAAMSVVNNEEELKAKLTLASDVSPDHPVVMSKFIEGAQEIDVDAVAYNGNVLVHAISEHVENAGVHSGDASLVLPPQHLSDDVKIALKDIADKVAKAWKITGPFNMQIIKDGEHTLKVIECNIRASRSFPFVSKVLGVNFIEIAVKAFLGGDIVPKPVDLMLNKKYDYVATKVPQFSFTRLAGADPFLGVEMASTGEVASFGRDLIESYWTAIQSTMNFHVPLPPSGILFGGDTSREYLGQVASIVATIGYRIYTTNETTKTYLQEHIKEKNAKVSLIKFPKNDKRKLRELFQEYDIKAVFNLASKRAESTDDVDYIMRRNAIDFAIPLFNEPQTALLFAKCLKAKIAEKIKILESHDVIVPPEVRSWDEFIGFKAY.

The tract at residues 23 to 420 is carboxyphosphate synthetic domain; that stretch reads QLVEGVNSVL…AFQKALRQVD (398 aa). ATP-binding residues include Arg-150, Arg-190, Gly-196, Gly-197, Lys-227, Leu-229, Glu-234, Gly-260, Val-261, His-262, Gln-303, and Glu-317. Positions 154–346 constitute an ATP-grasp 1 domain; that stretch reads ASALKDINIP…LAYTAAKIGL (193 aa). Residues Gln-303, Glu-317, and Asn-319 each contribute to the Mg(2+) site. Residues Gln-303, Glu-317, and Asn-319 each coordinate Mn(2+). Residues 421–573 form an oligomerization domain region; sequence PSLLGFQGST…YTTYNATKND (153 aa). Residues 574–958 form a carbamoyl phosphate synthetic domain region; that stretch reads VEFNENGMLV…SYWTAIQSTM (385 aa). The region spanning 698 to 890 is the ATP-grasp 2 domain; that stretch reads SSILDSIDVD…FIEIAVKAFL (193 aa). Arg-734, Lys-773, Ile-775, Glu-780, Gly-805, Val-806, His-807, Ser-808, Gln-848, and Glu-861 together coordinate ATP. Residues Gln-848, Glu-861, and Asn-863 each coordinate Mg(2+). Positions 848, 861, and 863 each coordinate Mn(2+). Positions 959–1102 are allosteric domain; it reads NFHVPLPPSG…KILESHDVIV (144 aa). The region spanning 960–1118 is the MGS-like domain; it reads FHVPLPPSGI…WDEFIGFKAY (159 aa).

Belongs to the CarB family. As to quaternary structure, heterodimer composed of 2 chains; the small (or glutamine) chain promotes the hydrolysis of glutamine to ammonia, which is used by the large (or ammonia) chain to synthesize carbamoyl phosphate. Requires Mg(2+) as cofactor. Mn(2+) serves as cofactor.

Its subcellular location is the cytoplasm. It carries out the reaction hydrogencarbonate + L-glutamine + 2 ATP + H2O = carbamoyl phosphate + L-glutamate + 2 ADP + phosphate + 2 H(+). It catalyses the reaction hydrogencarbonate + NH4(+) + 2 ATP = carbamoyl phosphate + 2 ADP + phosphate + 2 H(+). Its pathway is amino-acid biosynthesis; L-arginine biosynthesis; carbamoyl phosphate from bicarbonate: step 1/1. Functionally, large subunit of the arginine-specific carbamoyl phosphate synthase (CPSase). CPSase catalyzes the formation of carbamoyl phosphate from the ammonia moiety of glutamine, hydrogencarbonate, and phosphate donated by ATP, constituting the first step of 2 biosynthetic pathways, one leading to arginine and/or urea and the other to pyrimidine nucleotides. The large subunit (synthetase) binds the substrates ammonia (free or transferred from glutamine from the small subunit), hydrogencarbonate and ATP and carries out an ATP-coupled ligase reaction, activating hydrogencarbonate by forming carboxy phosphate which reacts with ammonia to form carbamoyl phosphate. The chain is Carbamoyl phosphate synthase arginine-specific large chain (CPA2) from Saccharomyces cerevisiae (strain ATCC 204508 / S288c) (Baker's yeast).